We begin with the raw amino-acid sequence, 308 residues long: Glutamyl-Q tRNA(Asp) synthetase (308 aa).

L-glutamate contacts are provided by residues 19-23 (RFAPS) and E55. The short motif at 22-32 (PSPSGELHFGS) is the 'HIGH' region element. Zn(2+) contacts are provided by C111, C113, Y125, and C129. L-glutamate-binding residues include Y182 and R200. Positions 238–242 (KLSKQ) match the 'KMSKS' region motif. Residue K241 participates in ATP binding.

Belongs to the class-I aminoacyl-tRNA synthetase family. GluQ subfamily. It depends on Zn(2+) as a cofactor.

Its function is as follows. Catalyzes the tRNA-independent activation of glutamate in presence of ATP and the subsequent transfer of glutamate onto a tRNA(Asp). Glutamate is transferred on the 2-amino-5-(4,5-dihydroxy-2-cyclopenten-1-yl) moiety of the queuosine in the wobble position of the QUC anticodon. This chain is Glutamyl-Q tRNA(Asp) synthetase, found in Shigella flexneri.